Here is a 393-residue protein sequence, read N- to C-terminus: MSQPISPGLIRSTLRQFLDSEASGGLVLMAVALAAIVTANSPLAEGYFHALHIYLGPLSLLHWINDALMALFFLLVGLEIKREMLDGQLSSWSRRILPGAAALGGMLFPALFYILFNRENPAALRGWAIPTATDIAFALGVISLFGPRVPASLKIFLAALAIIDDLGAVVIIALFYTSDLNLLALAAAAAVLAALYGMNRARILKLWPYLLLGAVLWVLVFASGIHATLAGVLLALTIPLKATPGTREASHEQSPLHHLEHILQKPVAFIVVPIFGFANAGVSFSGVSAATLTEPLTLGVAAGLLLGKLVGVLSTVFLLVKIGLADLPAKASWGQMTGVAALCGIGFTMSLFIGLLAFNDPDVQDHVKMGILLGSLLSGLVGAAMLATFNRRS.

Helical transmembrane passes span 24 to 44, 58 to 78, 96 to 116, 126 to 146, 155 to 175, 178 to 198, 214 to 234, 267 to 287, 300 to 320, 338 to 358, and 369 to 389; these read GGLVLMAVALAAIVTANSPLA, LSLLHWINDALMALFFLLVGL, ILPGAAALGGMLFPALFYILF, GWAIPTATDIAFALGVISLFG, IFLAALAIIDDLGAVVIIALF, SDLNLLALAAAAAVLAALYGM, AVLWVLVFASGIHATLAGVLL, VAFIVVPIFGFANAGVSFSGV, VAAGLLLGKLVGVLSTVFLLV, GVAALCGIGFTMSLFIGLLAF, and MGILLGSLLSGLVGAAMLATF.

Belongs to the NhaA Na(+)/H(+) (TC 2.A.33) antiporter family.

Its subcellular location is the cell inner membrane. The enzyme catalyses Na(+)(in) + 2 H(+)(out) = Na(+)(out) + 2 H(+)(in). In terms of biological role, na(+)/H(+) antiporter that extrudes sodium in exchange for external protons. This Rhizobium etli (strain ATCC 51251 / DSM 11541 / JCM 21823 / NBRC 15573 / CFN 42) protein is Na(+)/H(+) antiporter NhaA.